A 414-amino-acid polypeptide reads, in one-letter code: Coenzyme A biosynthesis bifunctional protein CoaBC (414 aa).

The segment at 1–191 is phosphopantothenoylcysteine decarboxylase; the sequence is MSARKRIVVG…ALPYDMAGVK (191 aa). Residues 192 to 414 form a phosphopantothenate--cysteine ligase region; that stretch reads ALVTAGGTRE…IAAFLKSQDG (223 aa). Residues 275 to 277, D281, K291, 293 to 294, 308 to 311, F332, K350, and K354 each bind CTP; these read MAA, KK, and DDVL.

This sequence in the N-terminal section; belongs to the HFCD (homo-oligomeric flavin containing Cys decarboxylase) superfamily. In the C-terminal section; belongs to the PPC synthetase family. As to quaternary structure, homododecamer. The cofactor is Mg(2+). FMN is required as a cofactor.

It carries out the reaction N-[(R)-4-phosphopantothenoyl]-L-cysteine + H(+) = (R)-4'-phosphopantetheine + CO2. It catalyses the reaction (R)-4'-phosphopantothenate + L-cysteine + CTP = N-[(R)-4-phosphopantothenoyl]-L-cysteine + CMP + diphosphate + H(+). It functions in the pathway cofactor biosynthesis; coenzyme A biosynthesis; CoA from (R)-pantothenate: step 2/5. Its pathway is cofactor biosynthesis; coenzyme A biosynthesis; CoA from (R)-pantothenate: step 3/5. Two related chemical scaffolds that potently inhibit the activity of the CoaB moiety of CoaBC through a cryptic allosteric site that sits in the dimer interface region of the CoaB enzyme were identified. Its function is as follows. Catalyzes two sequential steps in the biosynthesis of coenzyme A. In the first step cysteine is conjugated to 4'-phosphopantothenate to form 4-phosphopantothenoylcysteine. In the second step the latter compound is decarboxylated to form 4'-phosphopantotheine. This Mycolicibacterium smegmatis (strain ATCC 700084 / mc(2)155) (Mycobacterium smegmatis) protein is Coenzyme A biosynthesis bifunctional protein CoaBC.